A 353-amino-acid polypeptide reads, in one-letter code: S-adenosylmethionine:tRNA ribosyltransferase-isomerase (353 aa).

This sequence belongs to the QueA family. In terms of assembly, monomer.

It localises to the cytoplasm. The catalysed reaction is 7-aminomethyl-7-carbaguanosine(34) in tRNA + S-adenosyl-L-methionine = epoxyqueuosine(34) in tRNA + adenine + L-methionine + 2 H(+). Its pathway is tRNA modification; tRNA-queuosine biosynthesis. In terms of biological role, transfers and isomerizes the ribose moiety from AdoMet to the 7-aminomethyl group of 7-deazaguanine (preQ1-tRNA) to give epoxyqueuosine (oQ-tRNA). This is S-adenosylmethionine:tRNA ribosyltransferase-isomerase from Cupriavidus metallidurans (strain ATCC 43123 / DSM 2839 / NBRC 102507 / CH34) (Ralstonia metallidurans).